The following is a 106-amino-acid chain: MIDLERKNKYKCSIEYTLSFMGGKWKPIILWHLGTEGIHRYGELKRKLDGITHKMLAQQLKELADDNLIIRKEYPQVPPKVEYSITEKGMGLMEILNLMHKWGQEN.

An HTH hxlR-type domain is found at 12–106; sequence CSIEYTLSFM…NLMHKWGQEN (95 aa).

Potential regulator of the malBH genes. The polypeptide is Putative regulatory protein MalR (malR) (Fusobacterium mortiferum).